The chain runs to 560 residues: Calnexin homolog (560 aa).

Residues 1-22 (MKYGKVSFLALLCSLYVRGSLA) form the signal peptide. Residues 23 to 489 (DPESEQEPLV…ETIIETPEIG (467 aa)) lie on the Lumenal side of the membrane. An intrachain disulfide couples Cys132 to Cys163. An alpha-D-glucoside is bound by residues Tyr136, Lys138, Tyr154, and Asp161. The interval 242–375 (IYDPEDIKPA…RKIPNPDYFD (134 aa)) is p domain (Extended arm). 5 consecutive repeat copies span residues 244–255 (DPEDIKPADWVD), 261–272 (DPNAVKPDDWDE), 280–291 (DPDAVKPEDWLE), 299–310 (DPEAQKPEDWDD), and 314–324 (GDWIPSEIINP). 2 4 X approximate repeats regions span residues 244–310 (DPED…DWDD) and 314–371 (GDWI…IPNP). The disordered stretch occupies residues 253 to 273 (WVDEPEIPDPNAVKPDDWDED). A disulfide bond links Cys326 and Cys332. A run of 3 repeats spans residues 333–343 (GEWKPPMIRNP), 347–357 (GPWSPPMIPNP), and 361–371 (GEWYPRKIPNP). Glu391 contributes to the an alpha-D-glucoside binding site. A glycan (N-linked (GlcNAc...) asparagine) is linked at Asn418. The chain crosses the membrane as a helical span at residues 490–512 (IAIVAVLGSLTAVILTCYFYFFA). The Cytoplasmic portion of the chain corresponds to 513 to 560 (SSSPASLSTGTTEAEKEQQEKFKQETETEKIDVSYAPETESPTAKNED). Residues 517 to 560 (ASLSTGTTEAEKEQQEKFKQETETEKIDVSYAPETESPTAKNED) are disordered. Basic and acidic residues predominate over residues 525 to 544 (EAEKEQQEKFKQETETEKID). Thr551 is subject to Phosphothreonine. The residue at position 553 (Ser553) is a Phosphoserine. Thr555 carries the post-translational modification Phosphothreonine.

This sequence belongs to the calreticulin family.

It is found in the endoplasmic reticulum membrane. Its function is as follows. Calcium-binding protein that interacts with newly synthesized monoglucosylated glycoproteins in the endoplasmic reticulum. It may act in assisting protein assembly and/or in the retention within the ER of unassembled protein subunits. It seems to play a major role in the quality control apparatus of the ER by the retention of incorrectly folded proteins. The protein is Calnexin homolog (cal1) of Schizosaccharomyces pombe (strain 972 / ATCC 24843) (Fission yeast).